A 572-amino-acid chain; its full sequence is Proline--tRNA ligase (572 aa).

This sequence belongs to the class-II aminoacyl-tRNA synthetase family. ProS type 1 subfamily. As to quaternary structure, homodimer.

It is found in the cytoplasm. The enzyme catalyses tRNA(Pro) + L-proline + ATP = L-prolyl-tRNA(Pro) + AMP + diphosphate. In terms of biological role, catalyzes the attachment of proline to tRNA(Pro) in a two-step reaction: proline is first activated by ATP to form Pro-AMP and then transferred to the acceptor end of tRNA(Pro). As ProRS can inadvertently accommodate and process non-cognate amino acids such as alanine and cysteine, to avoid such errors it has two additional distinct editing activities against alanine. One activity is designated as 'pretransfer' editing and involves the tRNA(Pro)-independent hydrolysis of activated Ala-AMP. The other activity is designated 'posttransfer' editing and involves deacylation of mischarged Ala-tRNA(Pro). The misacylated Cys-tRNA(Pro) is not edited by ProRS. The chain is Proline--tRNA ligase from Buchnera aphidicola subsp. Acyrthosiphon pisum (strain APS) (Acyrthosiphon pisum symbiotic bacterium).